The sequence spans 273 residues: Putative B3 domain-containing protein At5g58280 (273 aa).

A DNA-binding region (TF-B3) is located at residues 127–218; that stretch reads FVKSMVRSHV…KFKIYVFKGN (92 aa). The tract at residues 225–273 is disordered; that stretch reads SARKRGRATTPSEEEEEEEDKDVEESGDEEHSSRATKRSSVRLLRKRKA. Positions 236–252 are enriched in acidic residues; it reads SEEEEEEEDKDVEESGD. Residues 258-273 show a composition bias toward basic residues; it reads RATKRSSVRLLRKRKA.

It localises to the nucleus. In Arabidopsis thaliana (Mouse-ear cress), this protein is Putative B3 domain-containing protein At5g58280.